The chain runs to 95 residues: Large ribosomal subunit protein bL25 (95 aa).

It belongs to the bacterial ribosomal protein bL25 family. Part of the 50S ribosomal subunit; part of the 5S rRNA/L5/L18/L25 subcomplex. Contacts the 5S rRNA. Binds to the 5S rRNA independently of L5 and L18.

This is one of the proteins that binds to the 5S RNA in the ribosome where it forms part of the central protuberance. The chain is Large ribosomal subunit protein bL25 from Actinobacillus pleuropneumoniae serotype 3 (strain JL03).